Reading from the N-terminus, the 119-residue chain is Immunoglobulin heavy variable 2-5 (119 aa).

A signal peptide spans 1-19 (MDTLCSTLLLLTIPSWVLS). Position 20 is a pyrrolidone carboxylic acid (Gln-20). The framework-1 stretch occupies residues 20–44 (QITLKESGPTLVKPTQTLTLTCTFS). In terms of domain architecture, Ig-like spans 20–119 (QITLKESGPT…DTATYYCAHR (100 aa)). Cys-41 and Cys-116 are oxidised to a cystine. The interval 45–54 (GFSLSTSGVG) is complementarity-determining-1. Positions 55–71 (VGWIRQPPGKALEWLAL) are framework-2. The segment at 72-78 (IYWDDDK) is complementarity-determining-2. Residues 79–116 (RYSPSLKSRLTITKDTSKNQVVLTMTNMDPVDTATYYC) form a framework-3 region. The interval 117–119 (AHR) is complementarity-determining-3.

In terms of assembly, immunoglobulins are composed of two identical heavy chains and two identical light chains; disulfide-linked.

Its subcellular location is the secreted. It is found in the cell membrane. In terms of biological role, v region of the variable domain of immunoglobulin heavy chains that participates in the antigen recognition. Immunoglobulins, also known as antibodies, are membrane-bound or secreted glycoproteins produced by B lymphocytes. In the recognition phase of humoral immunity, the membrane-bound immunoglobulins serve as receptors which, upon binding of a specific antigen, trigger the clonal expansion and differentiation of B lymphocytes into immunoglobulins-secreting plasma cells. Secreted immunoglobulins mediate the effector phase of humoral immunity, which results in the elimination of bound antigens. The antigen binding site is formed by the variable domain of one heavy chain, together with that of its associated light chain. Thus, each immunoglobulin has two antigen binding sites with remarkable affinity for a particular antigen. The variable domains are assembled by a process called V-(D)-J rearrangement and can then be subjected to somatic hypermutations which, after exposure to antigen and selection, allow affinity maturation for a particular antigen. This chain is Immunoglobulin heavy variable 2-5, found in Homo sapiens (Human).